The following is a 511-amino-acid chain: GMP synthase [glutamine-hydrolyzing] (511 aa).

The Glutamine amidotransferase type-1 domain maps to Asp5–Ile195. Residue Cys82 is the Nucleophile of the active site. Catalysis depends on residues His169 and Glu171. Residues Trp196–Arg386 form the GMPS ATP-PPase domain. Ser223–Ser229 contacts ATP.

In terms of assembly, homodimer.

The catalysed reaction is XMP + L-glutamine + ATP + H2O = GMP + L-glutamate + AMP + diphosphate + 2 H(+). Its pathway is purine metabolism; GMP biosynthesis; GMP from XMP (L-Gln route): step 1/1. Catalyzes the synthesis of GMP from XMP. This Campylobacter jejuni subsp. jejuni serotype O:2 (strain ATCC 700819 / NCTC 11168) protein is GMP synthase [glutamine-hydrolyzing] (guaA).